We begin with the raw amino-acid sequence, 236 residues long: Small ribosomal subunit protein uS2c (236 aa).

This sequence belongs to the universal ribosomal protein uS2 family.

It is found in the plastid. Its subcellular location is the chloroplast. The protein is Small ribosomal subunit protein uS2c (rps2) of Lolium perenne (Perennial ryegrass).